A 247-amino-acid polypeptide reads, in one-letter code: 14-3-3 protein gamma (247 aa).

Methionine 1 carries the N-acetylmethionine modification. The residue at position 2 (valine 2) is an N-acetylvaline; in 14-3-3 protein gamma, N-terminally processed. Positions 2–247 are interaction with SPATA18/MIEAP; it reads VDREQLVQKA…QDDDGGEGNN (246 aa). Serine 71 carries the phosphoserine modification. The residue at position 133 (tyrosine 133) is a Phosphotyrosine. Threonine 145 carries the post-translational modification Phosphothreonine. At serine 215 the chain carries Phosphoserine. Threonine 234 carries the post-translational modification Phosphothreonine. Serine 235 carries the phosphoserine modification.

Belongs to the 14-3-3 family. Homodimer. Part of a complex that contains DSG3, PKP1, YAP1 and YWHAG; the complex is required for localization of DSG3 and YAP1 to the cell membrane in keratinocytes. Interacts with SAMSN1. Interacts with RAF1, SSH1 and CRTC2/TORC2. Interacts with ABL1 (phosphorylated form); the interaction retains it in the cytoplasm. Interacts with GAB2. Interacts with MDM4 (phosphorylated); negatively regulates MDM4 activity toward TP53. Interacts with PKA-phosphorylated AANAT and SIRT2. Interacts with the 'Thr-369' phosphorylated form of DAPK2. Interacts with PI4KB, TBC1D22A and TBC1D22B. Interacts with SLITRK1. Interacts with LRRK2; this interaction is dependent on LRRK2 phosphorylation. Interacts with MARK2 and MARK3. Interacts with MEFV. Interacts with ENDOG, TSC2 and PIK3C3; interaction with ENDOG weakens its interaction with TSC2 and PIK3C3. Interacts with (phosphorylated) WDR24. Interacts with BEST1; this interaction promotes L-glutamate channel activity leading to the positive regulation of NMDA glutamate receptor activity through the L-glutamate secretion. Interacts with PKP1 (when phosphorylated); the interaction results in translocation of PKP1 to the cytoplasm and loss of intercellular adhesion in keratinocytes. Interacts with SPATA18/MIEAP; a protein that also plays a role in MALM. Post-translationally, phosphorylated by various PKC isozymes.

The protein localises to the cytoplasm. It is found in the cytosol. Its subcellular location is the mitochondrion matrix. Adapter protein implicated in the regulation of a large spectrum of both general and specialized signaling pathways. Binds to a large number of partners, usually by recognition of a phosphoserine or phosphothreonine motif. Binding generally results in the modulation of the activity of the binding partner. Promotes inactivation of WDR24 component of the GATOR2 complex by binding to phosphorylated WDR24. Participates in the positive regulation of NMDA glutamate receptor activity by promoting the L-glutamate secretion through interaction with BEST1. Reduces keratinocyte intercellular adhesion, via interacting with PKP1 and sequestering it in the cytoplasm, thereby reducing its incorporation into desmosomes. Plays a role in mitochondrial protein catabolic process (also named MALM) that promotes the degradation of damaged proteins inside mitochondria. This chain is 14-3-3 protein gamma, found in Bos taurus (Bovine).